The chain runs to 470 residues: Negative regulator of sexual conjugation and meiosis (470 aa).

Residues 18–295 (LRFVSIIGAG…ITLPELSTLV (278 aa)) form the Protein kinase domain. Residues 24–32 (IGAGAYGVV) and Lys47 each bind ATP. The active-site Proton acceptor is the Asp143. The residue at position 469 (Ser469) is a Phosphoserine.

Belongs to the protein kinase superfamily. Ser/Thr protein kinase family.

It carries out the reaction L-seryl-[protein] + ATP = O-phospho-L-seryl-[protein] + ADP + H(+). The enzyme catalyses L-threonyl-[protein] + ATP = O-phospho-L-threonyl-[protein] + ADP + H(+). This protein is a negative regulator of both sexual conjugation and meiosis. It phosphorylates mei2. It blocks the onset of meiosis until conjugation takes place. This Schizosaccharomyces pombe (strain 972 / ATCC 24843) (Fission yeast) protein is Negative regulator of sexual conjugation and meiosis (ran1).